The primary structure comprises 184 residues: Ribosome-recycling factor (184 aa).

Belongs to the RRF family.

It localises to the cytoplasm. Its function is as follows. Responsible for the release of ribosomes from messenger RNA at the termination of protein biosynthesis. May increase the efficiency of translation by recycling ribosomes from one round of translation to another. The protein is Ribosome-recycling factor of Borrelia turicatae (strain 91E135).